We begin with the raw amino-acid sequence, 313 residues long: NADH-ubiquinone oxidoreductase chain 2 (313 aa).

The next 10 membrane-spanning stretches (helical) occupy residues 3–23 (IWII…FIFW), 47–67 (SMIT…ISSF), 81–101 (INIS…LIMI), 105–125 (LTFY…LLII), 128–148 (FMNS…SIMA), 153–173 (LIKQ…LCLI), 177–197 (MNFW…IIIN), 220–240 (NTMI…GFFM), 253–275 (LIFM…RILT), and 293–313 (KSNF…NIFF).

It belongs to the complex I subunit 2 family.

The protein resides in the mitochondrion inner membrane. The catalysed reaction is a ubiquinone + NADH + 5 H(+)(in) = a ubiquinol + NAD(+) + 4 H(+)(out). In terms of biological role, core subunit of the mitochondrial membrane respiratory chain NADH dehydrogenase (Complex I) that is believed to belong to the minimal assembly required for catalysis. Complex I functions in the transfer of electrons from NADH to the respiratory chain. The immediate electron acceptor for the enzyme is believed to be ubiquinone. This Rhipicephalus sanguineus (Brown dog tick) protein is NADH-ubiquinone oxidoreductase chain 2 (ND2).